The sequence spans 338 residues: Beta-ketoacyl-[acyl-carrier-protein] synthase III 2 (338 aa).

Residues C119 and H255 contribute to the active site. The segment at Q256–R260 is ACP-binding. The active site involves N285.

The protein belongs to the thiolase-like superfamily. FabH family. In terms of assembly, homodimer.

The protein resides in the cytoplasm. It catalyses the reaction malonyl-[ACP] + acetyl-CoA + H(+) = 3-oxobutanoyl-[ACP] + CO2 + CoA. The protein operates within lipid metabolism; fatty acid biosynthesis. Its function is as follows. Catalyzes the condensation reaction of fatty acid synthesis by the addition to an acyl acceptor of two carbons from malonyl-ACP. Catalyzes the first condensation reaction which initiates fatty acid synthesis and may therefore play a role in governing the total rate of fatty acid production. Possesses both acetoacetyl-ACP synthase and acetyl transacylase activities. Its substrate specificity determines the biosynthesis of branched-chain and/or straight-chain of fatty acids. This is Beta-ketoacyl-[acyl-carrier-protein] synthase III 2 from Deinococcus radiodurans (strain ATCC 13939 / DSM 20539 / JCM 16871 / CCUG 27074 / LMG 4051 / NBRC 15346 / NCIMB 9279 / VKM B-1422 / R1).